A 538-amino-acid chain; its full sequence is D-alanyl-D-alanine carboxypeptidase (538 aa).

A disordered region spans residues 1-21 (MKQSSPEPLRPRRTGGRGGAR). The first 49 residues, 1 to 49 (MKQSSPEPLRPRRTGGRGGARRAAALVTIPLLPMTLLGASPALADASGA), serve as a signal peptide directing secretion. Ser-98 acts as the Acyl-ester intermediate in catalysis. Lys-101 (proton acceptor) is an active-site residue. The interval 146 to 319 (TLSAEDLDAM…KGDVGLGGVP (174 aa)) is absent in class-A beta-lactamases. Ser-347 is an active-site residue. Lys-459 provides a ligand contact to substrate. The propeptide at 516-538 (GARMMRGPVQGSGELECSWVQAC) is removed in mature form.

This sequence belongs to the peptidase S13 family.

The protein resides in the secreted. It carries out the reaction Preferential cleavage: (Ac)2-L-Lys-D-Ala-|-D-Ala. Also transpeptidation of peptidyl-alanyl moieties that are N-acyl substituents of D-alanine.. It functions in the pathway cell wall biogenesis; peptidoglycan biosynthesis. Its activity is regulated as follows. Inhibited by benzylpenicillin, cephaloridine, ampicillin and cetiofur. Its function is as follows. Removes C-terminal D-alanyl residues from sugar-peptide cell wall precursors. The chain is D-alanyl-D-alanine carboxypeptidase (dac) from Actinomadura sp. (strain R39).